The sequence spans 189 residues: Ribosome maturation factor RimM (189 aa).

Positions 95–169 (DEDEFFQTDL…IIKVEPHAAG (75 aa)) constitute a PRC barrel domain. The disordered stretch occupies residues 168 to 189 (AGLIADEHDNPPHESGKKPKKP). Residues 172 to 189 (ADEHDNPPHESGKKPKKP) show a composition bias toward basic and acidic residues.

It belongs to the RimM family. In terms of assembly, binds ribosomal protein uS19.

It is found in the cytoplasm. Functionally, an accessory protein needed during the final step in the assembly of 30S ribosomal subunit, possibly for assembly of the head region. Essential for efficient processing of 16S rRNA. May be needed both before and after RbfA during the maturation of 16S rRNA. It has affinity for free ribosomal 30S subunits but not for 70S ribosomes. This chain is Ribosome maturation factor RimM, found in Brucella abortus (strain S19).